Here is a 101-residue protein sequence, read N- to C-terminus: NADH-quinone oxidoreductase subunit K (101 aa).

3 helical membrane-spanning segments follow: residues 4 to 24, 30 to 50, and 62 to 82; these read LGHL…GIFL, IVLL…FIAF, and FVFF…AILV.

It belongs to the complex I subunit 4L family. NDH-1 is composed of 14 different subunits. Subunits NuoA, H, J, K, L, M, N constitute the membrane sector of the complex.

It is found in the cell inner membrane. It carries out the reaction a quinone + NADH + 5 H(+)(in) = a quinol + NAD(+) + 4 H(+)(out). Functionally, NDH-1 shuttles electrons from NADH, via FMN and iron-sulfur (Fe-S) centers, to quinones in the respiratory chain. The immediate electron acceptor for the enzyme in this species is believed to be ubiquinone. Couples the redox reaction to proton translocation (for every two electrons transferred, four hydrogen ions are translocated across the cytoplasmic membrane), and thus conserves the redox energy in a proton gradient. The chain is NADH-quinone oxidoreductase subunit K from Xanthomonas axonopodis pv. citri (strain 306).